Here is a 761-residue protein sequence, read N- to C-terminus: ARF GTPase-activating protein GIT1 (761 aa).

The 124-residue stretch at 1-124 (MSRKGPRAEV…AFVHKLPCRD (124 aa)) folds into the Arf-GAP domain. Residues 1–124 (MSRKGPRAEV…AFVHKLPCRD (124 aa)) form an interaction with gamma-tubulin and localization to the centrosome region. The C4-type zinc-finger motif lies at 11-34 (CADCSAPDPGWASISRGVLVCDEC). ANK repeat units lie at residues 132-161 (DLSKQLHSSVRTGNLETCLRLLSLGAQANF), 166-195 (KGTTPLHVAAKAGQTLQAELLVVYGADPGS), and 199-228 (NGRTPIDYARQAGHHELAERLVECQYELTD). Tyr224 carries the phosphotyrosine modification. Residues 245 to 365 (HYIIPQMADS…QGKSLSSPTD (121 aa)) are interaction with PCLO. Residues 253 to 415 (DSLDLSELAK…NRARSMDSSD (163 aa)) are interaction with PTK2/FAK1. The tract at residues 254–367 (SLDLSELAKA…KSLSSPTDNL (114 aa)) is interaction with ARHGEF7. The tract at residues 354–416 (RQQGKSLSSP…RARSMDSSDL (63 aa)) is disordered. The span at 357–374 (GKSLSSPTDNLELSLRSQ) shows a compositional bias: polar residues. 2 positions are modified to phosphoserine: Ser359 and Ser362. At Thr364 the chain carries Phosphothreonine. Residues 366-587 (NLELSLRSQS…QEGSRHTSKL (222 aa)) form an interaction with NCK2 and GRIN3A region. The required for localization at synapses stretch occupies residues 366–587 (NLELSLRSQS…QEGSRHTSKL (222 aa)). A phosphoserine mark is found at Ser370 and Ser375. Tyr383 is subject to Phosphotyrosine. A phosphoserine mark is found at Ser385 and Ser388. Acidic residues predominate over residues 385 to 394 (SVASDEDTDQ). A Phosphothreonine modification is found at Thr392. Phosphoserine is present on residues Ser410, Ser413, and Ser417. The tract at residues 411-466 (MDSSDLSDGAVTLQEYLELKKALATSEAKVQQLMKVNSSLSDELRRLQREIHKLQA) is interaction with MAPK1. The interaction with IKBKG stretch occupies residues 420 to 620 (AVTLQEYLEL…EGKRFLELGK (201 aa)). A coiled-coil region spans residues 440–474 (VQQLMKVNSSLSDELRRLQREIHKLQAENLQLRQP). The disordered stretch occupies residues 471 to 501 (LRQPPGPVPTPPLPSERAEHTPMAPGGSTHR). A compositionally biased stretch (pro residues) spans 474–484 (PPGPVPTPPLP). Thr480 is subject to Phosphothreonine. Ser498 and Ser536 each carry phosphoserine. At Thr537 the chain carries Phosphothreonine. Residues Tyr545 and Tyr554 each carry the phosphotyrosine modification. Phosphoserine is present on residues Ser561, Ser571, Ser592, and Ser596. The segment at 572–606 (PLLSCSQEGSRHTSKLSRHGSGADSDYENTQSGDP) is disordered. A Phosphothreonine modification is found at Thr601. Ser630 carries the post-translational modification Phosphoserine. The segment at 637 to 761 (PGLPSTEDVI…VTITTREKKQ (125 aa)) is interaction with PXN and TGFB1I1.

In terms of assembly, forms homodimers and possibly oligomers. May forms heterooligomers with GIT2. Interacts with G protein-coupled receptor kinases, including GRK2, GRK3, GRK5 and GRK6. Interacts with PPFIA1, PPFIA2 and PPFIA4. Interacts with GRIP1 and forms a ternary complex with PPFIA1 and GRIP1. Directly interacts with ARHGEF7/beta-PIX, forming in vitro a heptameric complex made of a GIT1 dimer and an ARHGEF7 trimer. Directly interacts with PXN/paxillin; this interaction is enhanced in the presence of ARHGEF7. Directly interacts (via C-terminus) with TGFB1I1/Hic-5 (via LD motif 3). Directly interacts with PTK2/FAK1. May interact with PTK2B/PYK2; this interaction may be indirect. Interacts with AMPA receptors GRIA2/3. Directly interacts with protein Piccolo/PCLO. Forms a complex with Ephrin-B1/EFNB1 and NCK2/GRB4 (via SH2); this interaction is important for spine morphogenesis and synapse formation. Interaction with NCK2 is transient and depends upon GIT1 phosphorylation at Tyr-383. Interacts with GRIN3A/GluN3A (via C-terminus); this interaction competes with GIT1 interaction with ARHGEF7 and limits synaptic localization of GIT1. Interacts with IKBKG/NEMO in resting bone mesenchymal stem cells, as well as in TNF-stimulated cells; this interaction may increase IKBKG affinity for 'Lys-63'-linked polyubiquitin chains. Interacts with GABA(A) receptors, including GABRB3 and GABRG2. Interacts with SCRIB. Interacts (via N- and C-terminus) with ENTR1/SDCCAG3 (via N-terminus); this interaction is direct. May form a tripartite complex with ENTR1 and PTPN13. Interacts with YWHAZ. Interacts with PAK1. Interacts with PAK3. Directly interacts (via N-terminus) with gamma-tubulin. Interacts with MAPK1 and MAPK3; this interaction is required for MAPK1/3 recruitment to focal adhesions. Post-translationally, phosphorylated by PAK1. Phosphorylation on tyrosine residues may be catalyzed by PTK2/FAK1 and SRC in growing fibroblasts. Phosphorylation at Tyr-383 is induced by activation of Ephrin-B1/EFNB1 and catalyzed by SRC family kinases. It is required for the interaction with NCK2 and for GIT1 recruitment to synapses in hippocampal neurons.

It localises to the cytoplasm. The protein resides in the synapse. The protein localises to the presynapse. It is found in the postsynapse. Its subcellular location is the postsynaptic density. It localises to the cell junction. The protein resides in the focal adhesion. The protein localises to the cell projection. It is found in the lamellipodium. Its subcellular location is the cytoskeleton. It localises to the microtubule organizing center. The protein resides in the centrosome. The protein localises to the spindle pole. Its function is as follows. GTPase-activating protein for ADP ribosylation factor family members, including ARF1. Multidomain scaffold protein that interacts with numerous proteins and therefore participates in many cellular functions, including receptor internalization, focal adhesion remodeling, and signaling by both G protein-coupled receptors and tyrosine kinase receptors. Through PAK1 activation, positively regulates microtubule nucleation during interphase. Plays a role in the regulation of cytokinesis; for this function, may act in a pathway also involving ENTR1 and PTPN13. May promote cell motility both by regulating focal complex dynamics and by local activation of RAC1. May act as scaffold for MAPK1/3 signal transduction in focal adhesions. Recruits MAPK1/3/ERK1/2 to focal adhesions after EGF stimulation via a Src-dependent pathway, hence stimulating cell migration. Plays a role in brain development and function. Involved in the regulation of spine density and synaptic plasticity that is required for processes involved in learning. Plays an important role in dendritic spine morphogenesis and synapse formation. In hippocampal neurons, recruits guanine nucleotide exchange factors (GEFs), such as ARHGEF7/beta-PIX, to the synaptic membrane. These in turn locally activate RAC1, which is an essential step for spine morphogenesis and synapse formation. May contribute to the organization of presynaptic active zones through oligomerization and formation of a Piccolo/PCLO-based protein network, which includes ARHGEF7/beta-PIX and FAK1. In neurons, through its interaction with liprin-alpha family members, may be required for AMPA receptor (GRIA2/3) proper targeting to the cell membrane. In complex with GABA(A) receptors and ARHGEF7, plays a crucial role in regulating GABA(A) receptor synaptic stability, maintaining GPHN/gephyrin scaffolds and hence GABAergic inhibitory synaptic transmission, by locally coordinating RAC1 and PAK1 downstream effector activity, leading to F-actin stabilization. May also be important for RAC1 downstream signaling pathway through PAK3 and regulation of neuronal inhibitory transmission at presynaptic input. Required for successful bone regeneration during fracture healing. The function in intramembranous ossification may, at least partly, exerted by macrophages in which GIT1 is a key negative regulator of redox homeostasis, IL1B production, and glycolysis, acting through the ERK1/2/NRF2/NFE2L2 axis. May play a role in angiogenesis during fracture healing. In this process, may regulate activation of the canonical NF-kappa-B signal in bone mesenchymal stem cells by enhancing the interaction between NEMO and 'Lys-63'-ubiquitinated RIPK1/RIP1, eventually leading to enhanced production of VEGFA and others angiogenic factors. Essential for VEGF signaling through the activation of phospholipase C-gamma and ERK1/2, hence may control endothelial cell proliferation and angiogenesis. The protein is ARF GTPase-activating protein GIT1 (GIT1) of Homo sapiens (Human).